Here is a 501-residue protein sequence, read N- to C-terminus: Phenylalanine--tRNA ligase alpha subunit (501 aa).

L-phenylalanine-binding residues include Thr340 and Phe423. A Mg(2+)-binding site is contributed by Glu425. Phe448 contacts L-phenylalanine.

Belongs to the class-II aminoacyl-tRNA synthetase family. Phe-tRNA synthetase alpha subunit type 2 subfamily. In terms of assembly, tetramer of two alpha and two beta subunits. Mg(2+) is required as a cofactor.

It localises to the cytoplasm. It catalyses the reaction tRNA(Phe) + L-phenylalanine + ATP = L-phenylalanyl-tRNA(Phe) + AMP + diphosphate + H(+). The chain is Phenylalanine--tRNA ligase alpha subunit from Methanococcus vannielii (strain ATCC 35089 / DSM 1224 / JCM 13029 / OCM 148 / SB).